A 432-amino-acid polypeptide reads, in one-letter code: Adenylosuccinate synthetase (432 aa).

GTP is bound by residues 13 to 19 and 41 to 43; these read GDEGKGK and GHT. Catalysis depends on Asp-14, which acts as the Proton acceptor. Residues Asp-14 and Gly-41 each coordinate Mg(2+). IMP is bound by residues 14–17, 39–42, Thr-130, Arg-144, Gln-225, Thr-240, and Arg-304; these read DEGK and NAGH. Catalysis depends on His-42, which acts as the Proton donor. 300-306 is a substrate binding site; the sequence is AVTGRPR. GTP contacts are provided by residues Arg-306, 332–334, and 415–417; these read KLD and STG.

This sequence belongs to the adenylosuccinate synthetase family. Homodimer. The cofactor is Mg(2+).

The protein localises to the cytoplasm. The enzyme catalyses IMP + L-aspartate + GTP = N(6)-(1,2-dicarboxyethyl)-AMP + GDP + phosphate + 2 H(+). It participates in purine metabolism; AMP biosynthesis via de novo pathway; AMP from IMP: step 1/2. In terms of biological role, plays an important role in the de novo pathway of purine nucleotide biosynthesis. Catalyzes the first committed step in the biosynthesis of AMP from IMP. This Glaesserella parasuis serovar 5 (strain SH0165) (Haemophilus parasuis) protein is Adenylosuccinate synthetase.